An 837-amino-acid polypeptide reads, in one-letter code: Protein translocase subunit SecA (837 aa).

ATP contacts are provided by residues Gln85, 103–107 (GEGKT), and Asp493. Residues Cys821, Cys823, Cys832, and His833 each contribute to the Zn(2+) site.

Belongs to the SecA family. Monomer and homodimer. Part of the essential Sec protein translocation apparatus which comprises SecA, SecYEG and auxiliary proteins SecDF. Other proteins may also be involved. Requires Zn(2+) as cofactor.

It localises to the cell membrane. The protein resides in the cytoplasm. The catalysed reaction is ATP + H2O + cellular proteinSide 1 = ADP + phosphate + cellular proteinSide 2.. Its function is as follows. Part of the Sec protein translocase complex. Interacts with the SecYEG preprotein conducting channel. Has a central role in coupling the hydrolysis of ATP to the transfer of proteins into and across the cell membrane, serving as an ATP-driven molecular motor driving the stepwise translocation of polypeptide chains across the membrane. The protein is Protein translocase subunit SecA of Streptococcus pneumoniae (strain P1031).